Consider the following 256-residue polypeptide: 5'-nucleotidase SurE (256 aa).

A divalent metal cation contacts are provided by Asp13, Asp14, Ser44, and Asn101.

Belongs to the SurE nucleotidase family. A divalent metal cation is required as a cofactor.

The protein localises to the cytoplasm. It carries out the reaction a ribonucleoside 5'-phosphate + H2O = a ribonucleoside + phosphate. Nucleotidase that shows phosphatase activity on nucleoside 5'-monophosphates. The polypeptide is 5'-nucleotidase SurE (Porphyromonas gingivalis (strain ATCC 33277 / DSM 20709 / CIP 103683 / JCM 12257 / NCTC 11834 / 2561)).